We begin with the raw amino-acid sequence, 150 residues long: Large ribosomal subunit protein bL9 (150 aa).

The protein belongs to the bacterial ribosomal protein bL9 family.

In terms of biological role, binds to the 23S rRNA. The polypeptide is Large ribosomal subunit protein bL9 (Serratia proteamaculans (strain 568)).